A 707-amino-acid polypeptide reads, in one-letter code: MDYSYDLEEVVEETIDYKDPCKAAAFWGDIALDEEDLANFKIDRIVDLTKHTIHTVSGAATNISRPEKGRRTRKERRRSREKRASTSRPERVWPDGVIPYVISGNFSGSQRAIFRQAMRHWEKHTCVTFLERTDEDSYIVFTYRPCGCCSYVGRRGGGPQAISIGKNCDKFGIVVHELGHVIGFWHEHTRPDRDDHVSIIRENIQPGQEYNFLKMEPEEVESLGETYDFDSIMHYARNTFSRGIFLDTILPKYDVNGVRPPIGQRTRLSSGDVAQARKLYKCPACGETLQDSQGNFSSPGFPNGYSAYMHCVWRLSVTPGEKIILNFTSLDLYRSRLCWYDYIEVRDGFWKKAPLRGRFCGDKIPESIISTESRLWIEFRSSSNWVGKGFQAVYEALCGGEVKKDSGHIQSPNYPDDYRPNKACVWKLSVSEGFHVGISFQSFEIERHDSCAYDYLEIRDGSSETSPLVGRFCGYDKPDDIKSSTNQLWIKFVSDGSINKAGFSLNYFKEVDECSRPNNGGCEQRCVNTLGSYKCACDPGYELGQDKKSCEAACGGFLTKLNGSINSPGWPKEYPPNKNCIWQLVAPTQYRISLKFDQFETEGNDVCKYDFVEVRSGLTSDSKLHGKFCGSELPAVITSQYNNMRIEFKSDNTVSKKGFQANFFSEKKNNIQKLQQLNEVNRGQQNQAPKRVRPRMRLRTVKKTRPP.

The segment at serine 57 to glutamate 90 is disordered. Asparagine 62 carries N-linked (GlcNAc...) asparagine glycosylation. The span at lysine 68–glutamate 81 shows a compositional bias: basic residues. One can recognise a Peptidase M12A domain in the interval alanine 84–proline 283. N-linked (GlcNAc...) asparagine glycosylation occurs at asparagine 105. Cystine bridges form between cysteine 126-cysteine 282, cysteine 146-cysteine 168, cysteine 148-cysteine 149, and cysteine 285-cysteine 311. Histidine 176 contributes to the Zn(2+) binding site. Glutamate 177 is an active-site residue. 2 residues coordinate Zn(2+): histidine 180 and histidine 186. 2 CUB domains span residues cysteine 285 to leucine 397 and cysteine 398 to lysine 509. Asparagine 295 and asparagine 326 each carry an N-linked (GlcNAc...) asparagine glycan. 8 disulfide bridges follow: cysteine 338/cysteine 360, cysteine 398/cysteine 424, cysteine 451/cysteine 473, cysteine 514/cysteine 526, cysteine 522/cysteine 535, cysteine 537/cysteine 550, cysteine 554/cysteine 580, and cysteine 607/cysteine 629. Residues glutamate 510–glutamate 551 enclose the EGF-like; calcium-binding domain. A CUB 3 domain is found at cysteine 554–glutamate 666. Asparagine 562 carries an N-linked (GlcNAc...) asparagine glycan. Residues arginine 682–proline 707 are disordered. A compositionally biased stretch (basic residues) spans lysine 690 to proline 707.

As to quaternary structure, interacts with olfml3/ont1. Zn(2+) serves as cofactor. Post-translationally, proteolytically activated in the trans-Golgi network by furin-like/paired basic proprotein convertases, cleavage is not required for secretion.

It localises to the golgi apparatus. The protein localises to the trans-Golgi network. Its subcellular location is the secreted. It is found in the extracellular space. The protein resides in the extracellular matrix. Its function is as follows. Metalloprotease involved in pattern formation in gastrula and later differentiation of developing organs. Able to cleave chordin (chrd), suggesting that it may act in dorsoventral patterning during early development by regulating the chordin (chrd) activity. The polypeptide is Bone morphogenetic protein 1 (bmp1) (Xenopus laevis (African clawed frog)).